The chain runs to 124 residues: Protein archease (124 aa).

Ca(2+) contacts are provided by H7, D10, D123, and T124.

It belongs to the archease family.

In terms of biological role, activates the tRNA-splicing ligase complex by facilitating the enzymatic turnover of catalytic subunit RtcB. Acts by promoting the guanylylation of RtcB, a key intermediate step in tRNA ligation. Can also alter the NTP specificity of RtcB such that ATP, dGTP or ITP is used efficiently. May also act as a chaperone or modulator of proteins involved in DNA or RNA processing. This is Protein archease from Thermotoga maritima (strain ATCC 43589 / DSM 3109 / JCM 10099 / NBRC 100826 / MSB8).